A 544-amino-acid chain; its full sequence is (E,E)-germacrene B synthase (544 aa).

The Mg(2+) site is built by D296, D300, and E449. Positions 296-300 (DDTFD) match the DDXXD motif motif.

Belongs to the terpene synthase family. Requires Mg(2+) as cofactor. The cofactor is Mn(2+).

It is found in the cytoplasm. It catalyses the reaction (2E,6E)-farnesyl diphosphate = (1E,4E)-germacrene B + diphosphate. Its pathway is secondary metabolite biosynthesis; terpenoid biosynthesis. Functionally, involved in the biosynthesis of germacrene B. The polypeptide is (E,E)-germacrene B synthase (SSTLH1) (Solanum habrochaites (Wild tomato)).